We begin with the raw amino-acid sequence, 573 residues long: 60 kDa heat shock protein, mitochondrial (573 aa).

A mitochondrion-targeting transit peptide spans 1–26 (MLRLPTVFRQMRPVSRVLAPHLTRAY). K31 bears the N6-succinyllysine mark. Residues S67 and S70 each carry the phosphoserine modification. K75 provides a ligand contact to ATP. Residue K75 is modified to N6-acetyllysine. At K82 the chain carries N6-acetyllysine; alternate. K82 is subject to N6-succinyllysine; alternate. K87 carries the N6-acetyllysine modification. The residue at position 90 (Y90) is a Phosphotyrosine. K91 is modified (N6-acetyllysine). 111–115 (DGTTT) is an ATP binding site. K125 is modified (N6-acetyllysine; alternate). Residue K125 is modified to N6-succinyllysine; alternate. The residue at position 130 (K130) is an N6-acetyllysine. Position 133 is an N6-acetyllysine; alternate (K133). An N6-succinyllysine; alternate modification is found at K133. K133 is modified (N6-malonyllysine; alternate). K156 is modified (N6-acetyllysine). N6-acetyllysine; alternate occurs at positions 191, 202, 205, 218, and 236. 5 positions are modified to N6-succinyllysine; alternate: K191, K202, K205, K218, and K236. At K249 the chain carries N6-acetyllysine. At K250 the chain carries N6-acetyllysine; alternate. N6-succinyllysine; alternate is present on K250. 2 positions are modified to N6-acetyllysine: K269 and K292. N6-succinyllysine is present on K301. Position 314 is an N6-acetyllysine (K314). K352 is subject to N6-acetyllysine; alternate. K352 carries the N6-succinyllysine; alternate modification. Residues K359 and K389 each carry the N6-acetyllysine modification. Residue K396 is modified to N6-acetyllysine; alternate. K396 bears the N6-succinyllysine; alternate mark. S410 is subject to Phosphoserine. G440 contributes to the ATP binding site. Position 469 is an N6-acetyllysine (K469). The residue at position 481 (K481) is an N6-acetyllysine; alternate. K481 is subject to N6-succinyllysine; alternate. S488 is subject to Phosphoserine. D520 serves as a coordination point for ATP. Residue K551 forms a Glycyl lysine isopeptide (Lys-Gly) (interchain with G-Cter in SUMO2) linkage.

This sequence belongs to the chaperonin (HSP60) family. Homoheptamer arranged in a ring structure. The functional units of these chaperonins consist of heptameric rings of the large subunit Hsp60, which function as a back-to-back double ring. Interacts with 2 heptameric Hsp10 rings to form the symmetrical football complex. Interacts with HRAS. Interacts with ATAD3A. Interacts with ETFBKMT and EEF1AKMT3. Interacts with MFHAS1. In terms of assembly, (Microbial infection) Interacts with hepatitis B virus/HBV protein X. As to quaternary structure, (Microbial infection) Interacts with HTLV-1 protein p40tax.

The protein resides in the mitochondrion matrix. It catalyses the reaction ATP + H2O + a folded polypeptide = ADP + phosphate + an unfolded polypeptide.. Functionally, chaperonin implicated in mitochondrial protein import and macromolecular assembly. Together with Hsp10, facilitates the correct folding of imported proteins. May also prevent misfolding and promote the refolding and proper assembly of unfolded polypeptides generated under stress conditions in the mitochondrial matrix. The functional units of these chaperonins consist of heptameric rings of the large subunit Hsp60, which function as a back-to-back double ring. In a cyclic reaction, Hsp60 ring complexes bind one unfolded substrate protein per ring, followed by the binding of ATP and association with 2 heptameric rings of the co-chaperonin Hsp10. This leads to sequestration of the substrate protein in the inner cavity of Hsp60 where, for a certain period of time, it can fold undisturbed by other cell components. Synchronous hydrolysis of ATP in all Hsp60 subunits results in the dissociation of the chaperonin rings and the release of ADP and the folded substrate protein. The protein is 60 kDa heat shock protein, mitochondrial (HSPD1) of Homo sapiens (Human).